Here is a 119-residue protein sequence, read N- to C-terminus: Large ribosomal subunit protein bL20 (119 aa).

This sequence belongs to the bacterial ribosomal protein bL20 family.

Binds directly to 23S ribosomal RNA and is necessary for the in vitro assembly process of the 50S ribosomal subunit. It is not involved in the protein synthesizing functions of that subunit. This is Large ribosomal subunit protein bL20 from Alcanivorax borkumensis (strain ATCC 700651 / DSM 11573 / NCIMB 13689 / SK2).